The sequence spans 512 residues: Kynurenine 3-monooxygenase (512 aa).

It belongs to the aromatic-ring hydroxylase family. KMO subfamily. It depends on FAD as a cofactor.

It is found in the mitochondrion outer membrane. It catalyses the reaction L-kynurenine + NADPH + O2 + H(+) = 3-hydroxy-L-kynurenine + NADP(+) + H2O. It functions in the pathway cofactor biosynthesis; NAD(+) biosynthesis; quinolinate from L-kynurenine: step 1/3. In terms of biological role, catalyzes the hydroxylation of L-kynurenine (L-Kyn) to form 3-hydroxy-L-kynurenine (L-3OHKyn). Required for synthesis of quinolinic acid. The chain is Kynurenine 3-monooxygenase (bna4) from Aspergillus clavatus (strain ATCC 1007 / CBS 513.65 / DSM 816 / NCTC 3887 / NRRL 1 / QM 1276 / 107).